Consider the following 1928-residue polypeptide: Myosin-1 (1928 aa).

The region spanning 8–71 (SSNMIVWIPD…RISDVFPVNP (64 aa)) is the Myosin N-terminal SH3-like domain. Residues 75–791 (DKVENMSELT…VLADLEKQKD (717 aa)) enclose the Myosin motor domain. 180–187 (GESGAGKT) is a binding site for ATP. Residues 460–529 (IGLLDIAGFE…LQLTIDLIES (70 aa)) form an actin-binding region. Over residues 629 to 641 (SSSAGVEANISNQ) the composition is skewed to polar residues. The segment at 629-657 (SSSAGVEANISNQEVKKSARTSTFKTTSS) is disordered. Positions 794–823 (LNNIMIKLTATIRGYTVRKEITYHLQKLKK) constitute an IQ domain. Positions 856–1911 (SSNDMTRTKK…FWKSRYESTM (1056 aa)) form a coiled coil.

The protein belongs to the TRAFAC class myosin-kinesin ATPase superfamily. Myosin family.

Functionally, required for cell division. The protein is Myosin-1 (MYO1) of Saccharomyces cerevisiae (strain ATCC 204508 / S288c) (Baker's yeast).